Here is a 977-residue protein sequence, read N- to C-terminus: Pro-apoptotic serine protease NMA111 (977 aa).

Residues 1-36 are disordered; it reads MTIQAHKRTLSEVSTSSVGQLKRREGYTEDYTDEGS. The serine protease stretch occupies residues 64–254; that stretch reads VVSVHFAQVA…LPLDRILRAL (191 aa). Active-site charge relay system residues include histidine 102, aspartate 133, and serine 216. 2 PDZ domains span residues 271-356 and 749-835; these read QWLL…LVVQ and SVLQ…VRKG.

The protein belongs to the peptidase S1C family.

The protein localises to the nucleus. Nuclear serine protease which mediates apoptosis. The protein is Pro-apoptotic serine protease NMA111 (NMA111) of Eremothecium gossypii (strain ATCC 10895 / CBS 109.51 / FGSC 9923 / NRRL Y-1056) (Yeast).